The following is a 437-amino-acid chain: Dolichyl-diphosphooligosaccharide--protein glycosyltransferase subunit wbp1 (437 aa).

An N-terminal signal peptide occupies residues 1–19 (MKSALCIALALTWSLLVQA). Over 20–401 (ARQTVLAVAD…FPRFLPHAYP (382 aa)) the chain is Lumenal. 2 N-linked (GlcNAc...) asparagine glycosylation sites follow: Asn275 and Asn289. The chain crosses the membrane as a helical span at residues 402–422 (YYASCFSVLGAFLLFCGIWLL). Over 423 to 437 (QKPAKPVVPSAKKQN) the chain is Cytoplasmic.

This sequence belongs to the DDOST 48 kDa subunit family. Component of the oligosaccharyltransferase (OST) complex.

Its subcellular location is the endoplasmic reticulum. The protein resides in the membrane. It participates in protein modification; protein glycosylation. Functionally, subunit of the oligosaccharyl transferase (OST) complex that catalyzes the initial transfer of a defined glycan (Glc(3)Man(9)GlcNAc(2) in eukaryotes) from the lipid carrier dolichol-pyrophosphate to an asparagine residue within an Asn-X-Ser/Thr consensus motif in nascent polypeptide chains, the first step in protein N-glycosylation. N-glycosylation occurs cotranslationally and the complex associates with the Sec61 complex at the channel-forming translocon complex that mediates protein translocation across the endoplasmic reticulum (ER). All subunits are required for a maximal enzyme activity. The polypeptide is Dolichyl-diphosphooligosaccharide--protein glycosyltransferase subunit wbp1 (wbp1) (Schizosaccharomyces pombe (strain 972 / ATCC 24843) (Fission yeast)).